The sequence spans 529 residues: Lanosterol 14-alpha demethylase (529 aa).

C468 serves as a coordination point for heme.

This sequence belongs to the cytochrome P450 family. It depends on heme as a cofactor.

Its subcellular location is the membrane. The enzyme catalyses a 14alpha-methyl steroid + 3 reduced [NADPH--hemoprotein reductase] + 3 O2 = a Delta(14) steroid + formate + 3 oxidized [NADPH--hemoprotein reductase] + 4 H2O + 4 H(+). The catalysed reaction is a 14alpha-methyl steroid + reduced [NADPH--hemoprotein reductase] + O2 = a 14alpha-hydroxymethyl steroid + oxidized [NADPH--hemoprotein reductase] + H2O + H(+). It carries out the reaction a 14alpha-hydroxymethyl steroid + reduced [NADPH--hemoprotein reductase] + O2 = a 14alpha-formyl steroid + oxidized [NADPH--hemoprotein reductase] + 2 H2O + H(+). It catalyses the reaction a 14alpha-formyl steroid + reduced [NADPH--hemoprotein reductase] + O2 = a Delta(14) steroid + formate + oxidized [NADPH--hemoprotein reductase] + H2O + 2 H(+). The enzyme catalyses lanosterol + 3 reduced [NADPH--hemoprotein reductase] + 3 O2 = 4,4-dimethyl-5alpha-cholesta-8,14,24-trien-3beta-ol + formate + 3 oxidized [NADPH--hemoprotein reductase] + 4 H2O + 4 H(+). The catalysed reaction is lanosterol + reduced [NADPH--hemoprotein reductase] + O2 = 32-hydroxylanosterol + oxidized [NADPH--hemoprotein reductase] + H2O + H(+). It carries out the reaction 32-hydroxylanosterol + reduced [NADPH--hemoprotein reductase] + O2 = 32-oxolanosterol + oxidized [NADPH--hemoprotein reductase] + 2 H2O + H(+). It catalyses the reaction 32-oxolanosterol + reduced [NADPH--hemoprotein reductase] + O2 = 4,4-dimethyl-5alpha-cholesta-8,14,24-trien-3beta-ol + formate + oxidized [NADPH--hemoprotein reductase] + H2O + 2 H(+). The enzyme catalyses eburicol + 3 reduced [NADPH--hemoprotein reductase] + 3 O2 = 14-demethyleburicol + formate + 3 oxidized [NADPH--hemoprotein reductase] + 4 H2O + 4 H(+). The catalysed reaction is eburicol + reduced [NADPH--hemoprotein reductase] + O2 = 32-hydroxyeburicol + oxidized [NADPH--hemoprotein reductase] + H2O + H(+). It carries out the reaction 32-hydroxyeburicol + reduced [NADPH--hemoprotein reductase] + O2 = 32-oxoeburicol + oxidized [NADPH--hemoprotein reductase] + 2 H2O + H(+). It catalyses the reaction 32-oxoeburicol + reduced [NADPH--hemoprotein reductase] + O2 = 14-demethyleburicol + formate + oxidized [NADPH--hemoprotein reductase] + H2O + 2 H(+). It participates in steroid biosynthesis; zymosterol biosynthesis; zymosterol from lanosterol: step 1/6. Sterol 14alpha-demethylase that plays a critical role in the third module of ergosterol biosynthesis pathway, being ergosterol the major sterol component in fungal membranes that participates in a variety of functions. The third module or late pathway involves the ergosterol synthesis itself through consecutive reactions that mainly occur in the endoplasmic reticulum (ER) membrane. In filamentous fungi, during the initial step of this module, lanosterol (lanosta-8,24-dien-3beta-ol) can be metabolized to eburicol. Sterol 14alpha-demethylase catalyzes the three-step oxidative removal of the 14alpha-methyl group (C-32) of both these sterols in the form of formate, and converts eburicol and lanosterol to 14-demethyleburicol (4,4,24-trimethylergosta-8,14,24(28)-trienol) and 4,4-dimethyl-5alpha-cholesta-8,14,24-trien-3beta-ol, respectively, which are further metabolized by other enzymes in the pathway to ergosterol. Can also use substrates not intrinsic to fungi, such as 24,25-dihydrolanosterol (DHL), producing 4,4-dimethyl-8,14-cholestadien-3-beta-ol, but at lower rates than the endogenous substrates. This Eremothecium gossypii (strain ATCC 10895 / CBS 109.51 / FGSC 9923 / NRRL Y-1056) (Yeast) protein is Lanosterol 14-alpha demethylase (ERG11).